A 445-amino-acid polypeptide reads, in one-letter code: Deoxyribodipyrimidine photo-lyase (445 aa).

One can recognise a Photolyase/cryptochrome alpha/beta domain in the interval 20-148 (SYVVYWMQAS…QVESNVIVPV (129 aa)). Arg239 provides a ligand contact to DNA.

This sequence belongs to the DNA photolyase class-2 family. FAD serves as cofactor. Coenzyme F420-(gamma-Glu)n is required as a cofactor.

The enzyme catalyses cyclobutadipyrimidine (in DNA) = 2 pyrimidine residues (in DNA).. Functionally, involved in repair of UV radiation-induced DNA damage. Catalyzes the light-dependent monomerization (300-600 nm) of cyclobutyl pyrimidine dimers (in cis-syn configuration), which are formed between adjacent bases on the same DNA strand upon exposure to ultraviolet radiation. The polypeptide is Deoxyribodipyrimidine photo-lyase (phr) (Methanothermobacter thermautotrophicus (strain ATCC 29096 / DSM 1053 / JCM 10044 / NBRC 100330 / Delta H) (Methanobacterium thermoautotrophicum)).